A 465-amino-acid chain; its full sequence is Solute carrier family 7 member 12 (465 aa).

The Cytoplasmic portion of the chain corresponds to Met-1–Ala-6. Residues Leu-7–Val-27 traverse the membrane as a helical segment. Residues Thr-28–Asn-39 are Extracellular-facing. Residues Ile-40–Cys-60 form a helical membrane-spanning segment. Residues Asn-61 to Thr-81 lie on the Cytoplasmic side of the membrane. Residues Leu-82–Ile-102 form a helical membrane-spanning segment. The Extracellular portion of the chain corresponds to Gly-103–Ala-132. A helical membrane pass occupies residues Leu-133–Phe-153. A topological domain (cytoplasmic) is located at residue Asn-154. Residues Thr-155–Val-175 traverse the membrane as a helical segment. The Extracellular portion of the chain corresponds to Asn-176–Ala-202. The helical transmembrane segment at Ile-203–Ile-223 threads the bilayer. Topologically, residues Lys-224–Leu-234 are cytoplasmic. A helical membrane pass occupies residues Ile-235 to Val-255. The Extracellular portion of the chain corresponds to Leu-256–Gln-280. The chain crosses the membrane as a helical span at residues Trp-281–Ser-301. The Cytoplasmic segment spans residues Ala-302 to Ser-327. The helical transmembrane segment at Pro-328–Leu-351 threads the bilayer. Residues Val-352–Ser-356 lie on the Extracellular side of the membrane. The helical transmembrane segment at Leu-357 to Tyr-375 threads the bilayer. Residues Gln-376 to Val-386 are Cytoplasmic-facing. Residues Trp-387 to Ile-407 form a helical membrane-spanning segment. Over Gln-408–Ser-409 the chain is Extracellular. Residues Pro-410 to Leu-430 form a helical membrane-spanning segment. Residues Gln-431–Asn-465 are Cytoplasmic-facing.

This sequence belongs to the amino acid-polyamine-organocation (APC) superfamily. Probably forms multimers, perhaps with an unknown protein(s). As to expression, expressed in kidney and red blood cells (at protein level). Expressed in kidney along the collecting ducts in the cortex, outer and inner medulla. May be expressed in placenta, lungs, spleen and skeletal muscles.

The protein localises to the apical cell membrane. It is found in the basal cell membrane. Its subcellular location is the cytoplasm. Its function is as follows. Probably mediates sodium- and chloride-independent uptake of neutral amino acids. The polypeptide is Solute carrier family 7 member 12 (Mus musculus (Mouse)).